The sequence spans 88 residues: Adenylosuccinate lyase (88 aa).

N(6)-(1,2-dicarboxyethyl)-AMP contacts are provided by residues 4–5 (RY) and 67–69 (KHD).

The protein belongs to the lyase 1 family. Adenylosuccinate lyase subfamily. In terms of assembly, homotetramer and homodimer. Residues from neighboring subunits contribute catalytic and substrate-binding residues to each active site.

It catalyses the reaction N(6)-(1,2-dicarboxyethyl)-AMP = fumarate + AMP. It carries out the reaction (2S)-2-[5-amino-1-(5-phospho-beta-D-ribosyl)imidazole-4-carboxamido]succinate = 5-amino-1-(5-phospho-beta-D-ribosyl)imidazole-4-carboxamide + fumarate. It participates in purine metabolism; AMP biosynthesis via de novo pathway; AMP from IMP: step 2/2. The protein operates within purine metabolism; IMP biosynthesis via de novo pathway; 5-amino-1-(5-phospho-D-ribosyl)imidazole-4-carboxamide from 5-amino-1-(5-phospho-D-ribosyl)imidazole-4-carboxylate: step 2/2. Functionally, catalyzes two reactions in de novo purine nucleotide biosynthesis. Catalyzes the breakdown of 5-aminoimidazole- (N-succinylocarboxamide) ribotide (SAICAR or 2-[5-amino-1-(5-phospho-beta-D-ribosyl)imidazole-4-carboxamido]succinate) to 5-aminoimidazole-4-carboxamide ribotide (AICAR or 5-amino-1-(5-phospho-beta-D-ribosyl)imidazole-4-carboxamide) and fumarate, and of adenylosuccinate (ADS or N(6)-(1,2-dicarboxyethyl)-AMP) to adenosine monophosphate (AMP) and fumarate. The polypeptide is Adenylosuccinate lyase (purB) (Spiroplasma citri).